Here is a 316-residue protein sequence, read N- to C-terminus: Acetaldehyde dehydrogenase (316 aa).

11–14 (SGNI) is a binding site for NAD(+). Catalysis depends on C131, which acts as the Acyl-thioester intermediate. NAD(+) contacts are provided by residues 162–170 (SAGPGTRAN) and N289.

This sequence belongs to the acetaldehyde dehydrogenase family. As to quaternary structure, interacts with MhpE.

The catalysed reaction is acetaldehyde + NAD(+) + CoA = acetyl-CoA + NADH + H(+). It functions in the pathway aromatic compound metabolism; 3-phenylpropanoate degradation. Its function is as follows. Catalyzes the conversion of acetaldehyde to acetyl-CoA, using NAD(+) and coenzyme A. Is the final enzyme in the meta-cleavage pathway for the degradation of aromatic compounds. This is Acetaldehyde dehydrogenase from Klebsiella pneumoniae subsp. pneumoniae (strain ATCC 700721 / MGH 78578).